A 417-amino-acid chain; its full sequence is Serine hydroxymethyltransferase (417 aa).

(6S)-5,6,7,8-tetrahydrofolate is bound by residues Leu121 and 125-127 (GHL). Lys229 is modified (N6-(pyridoxal phosphate)lysine). Residue 355-357 (SPF) coordinates (6S)-5,6,7,8-tetrahydrofolate.

Belongs to the SHMT family. Homodimer. It depends on pyridoxal 5'-phosphate as a cofactor.

The protein localises to the cytoplasm. The catalysed reaction is (6R)-5,10-methylene-5,6,7,8-tetrahydrofolate + glycine + H2O = (6S)-5,6,7,8-tetrahydrofolate + L-serine. The protein operates within one-carbon metabolism; tetrahydrofolate interconversion. Its pathway is amino-acid biosynthesis; glycine biosynthesis; glycine from L-serine: step 1/1. Its function is as follows. Catalyzes the reversible interconversion of serine and glycine with tetrahydrofolate (THF) serving as the one-carbon carrier. This reaction serves as the major source of one-carbon groups required for the biosynthesis of purines, thymidylate, methionine, and other important biomolecules. Also exhibits THF-independent aldolase activity toward beta-hydroxyamino acids, producing glycine and aldehydes, via a retro-aldol mechanism. The protein is Serine hydroxymethyltransferase of Xanthomonas axonopodis pv. citri (strain 306).